We begin with the raw amino-acid sequence, 427 residues long: Neuronal pentraxin-2 (427 aa).

The signal sequence occupies residues 1–17 (MLALLAAGVAFAVVVLA). Asn144 and Asn185 each carry an N-linked (GlcNAc...) asparagine glycan. A Pentraxin (PTX) domain is found at 219 to 420 (DAFKVSLPFR…GASKWPVETC (202 aa)). Cys249 and Cys309 form a disulfide bridge. Positions 273, 351, 352, 353, and 363 each coordinate Ca(2+). Asn389 carries an N-linked (GlcNAc...) asparagine glycan.

Homooligomer or heterooligomer (probably pentamer) with neuronal pentraxin receptor (NPTXR). Ca(2+) serves as cofactor. Testis specific.

The protein resides in the cytoplasmic vesicle. Its subcellular location is the secretory vesicle. It localises to the acrosome lumen. Its function is as follows. May be involved in binding, concentrating, and sorting soluble glycoproteins or glycolipids that are destined for the acrosome. The chain is Neuronal pentraxin-2 (NPTX2) from Cavia porcellus (Guinea pig).